The following is a 100-amino-acid chain: Small ribosomal subunit protein uS14c (100 aa).

Belongs to the universal ribosomal protein uS14 family. In terms of assembly, part of the 30S ribosomal subunit.

It is found in the plastid. Its subcellular location is the chloroplast. Its function is as follows. Binds 16S rRNA, required for the assembly of 30S particles. This is Small ribosomal subunit protein uS14c from Chaetosphaeridium globosum (Charophycean green alga).